A 651-amino-acid chain; its full sequence is J domain-containing protein required for chloroplast accumulation response 1 (651 aa).

A compositionally biased stretch (polar residues) spans 1 to 17; it reads MQTLPSSETVLLGSNSA. Disordered regions lie at residues 1–56, 114–138, 156–176, 250–291, and 308–526; these read MQTL…TRHS, GSRI…QFSL, LNKN…SKAD, KLGK…TDLK, and KPLD…IDEP. Ser-56 carries the post-translational modification Phosphoserine. Residues 126-137 show a composition bias toward low complexity; it reads SSSGTSSPSQFS. Composition is skewed to basic and acidic residues over residues 250–259, 281–291, 337–357, 405–416, 441–456, and 488–497; these read KLGKNEEGDG, TKEEKTETDLK, IFHE…EVRK, VGKDGVKGKVSD, RAKE…DGSN, and QKKDSDRESM. Residues 532–562 are a coiled coil; it reads DVEDITQDENKMEEANKDAEEIKNIDAKIRK. Residues 586-651 form the J domain; that stretch reads SGWKPVPLMD…WDHFNTLGPV (66 aa).

As to expression, expressed in leaves and stems, but not in roots.

It localises to the cytoplasm. Its function is as follows. Required for chloroplast photorelocation movement; chloroplast accumulation upon low blue light and for chloroplast movement to the bottom of cells in darkness, by modulating chloroplast actin (Cp-actin) filaments distribution, appearance and disappearance. May mediate a slight resistance to aluminum in root hair cells. This is J domain-containing protein required for chloroplast accumulation response 1 (JAC1) from Arabidopsis thaliana (Mouse-ear cress).